The sequence spans 445 residues: Putative transcription factor bHLH056 (445 aa).

Disordered stretches follow at residues 36-70, 224-260, and 365-445; these read NQTH…PPHL, QIQP…AEMH, and PFPN…QPTA. The segment covering 231–246 has biased composition (basic and acidic residues); the sequence is SKLKAREETHGTEEAR. The 50-residue stretch at 255-304 folds into the bHLH domain; that stretch reads RTAEMHNLAERRRREKINEKMKTLQQLIPRCNKSTKVSTLDDAIEYVKSL. A compositionally biased stretch (low complexity) spans 418–433; it reads QGQTTSQLSSGQASSS.

As to quaternary structure, homodimer.

It localises to the nucleus. This Arabidopsis thaliana (Mouse-ear cress) protein is Putative transcription factor bHLH056 (BHLH56).